Reading from the N-terminus, the 1363-residue chain is DNA-directed RNA polymerase subunit beta' (1363 aa).

A disordered region spans residues 1–39; that stretch reads MTSTPSKSRKSSKGSKAAKAAASAPETRPLAKTPPPFRN. Positions 14 to 24 are enriched in low complexity; sequence GSKAAKAAASA. Zn(2+)-binding residues include Cys248, Cys315, Cys322, and Cys325.

This sequence belongs to the RNA polymerase beta' chain family. RpoC2 subfamily. As to quaternary structure, in cyanobacteria the RNAP catalytic core is composed of 2 alpha, 1 beta, 1 beta', 1 gamma and 1 omega subunit. When a sigma factor is associated with the core the holoenzyme is formed, which can initiate transcription. It depends on Zn(2+) as a cofactor.

The enzyme catalyses RNA(n) + a ribonucleoside 5'-triphosphate = RNA(n+1) + diphosphate. DNA-dependent RNA polymerase catalyzes the transcription of DNA into RNA using the four ribonucleoside triphosphates as substrates. The sequence is that of DNA-directed RNA polymerase subunit beta' from Synechococcus sp. (strain WH7803).